A 443-amino-acid chain; its full sequence is Putative F-box/FBD/LRR-repeat protein At3g49030 (443 aa).

Positions 20–68 (EDRISELPEDLLLQILSDIPTENVIATSVLSKRWRSLWKMVPNLTFDFT) constitute an F-box domain. LRR repeat units follow at residues 74–100 (HQTF…QLNF), 152–179 (ILEI…RLYE), 180–205 (VHFK…SVHR), 218–252 (VPSL…NIVG), 272–297 (ISDV…SLES), and 320–345 (KERE…KLTG). An FBD domain is found at 357-408 (NWNPPKCVPECLLFHLEKFLWTGYEWQRGDEKEVATYILENARLLKKATFST).

In Arabidopsis thaliana (Mouse-ear cress), this protein is Putative F-box/FBD/LRR-repeat protein At3g49030.